We begin with the raw amino-acid sequence, 109 residues long: Urease subunit gamma (109 aa).

It belongs to the urease gamma subunit family. Heterotrimer of UreA (gamma), UreB (beta) and UreC (alpha) subunits. Three heterotrimers associate to form the active enzyme.

The protein localises to the cytoplasm. It catalyses the reaction urea + 2 H2O + H(+) = hydrogencarbonate + 2 NH4(+). The protein operates within nitrogen metabolism; urea degradation; CO(2) and NH(3) from urea (urease route): step 1/1. In Natronomonas pharaonis (strain ATCC 35678 / DSM 2160 / CIP 103997 / JCM 8858 / NBRC 14720 / NCIMB 2260 / Gabara) (Halobacterium pharaonis), this protein is Urease subunit gamma.